Consider the following 390-residue polypeptide: Cell division protein FtsZ (390 aa).

GTP is bound by residues 20-24 (GGGNN), 106-108 (GTG), E137, R141, and D184.

This sequence belongs to the FtsZ family. In terms of assembly, homodimer. Polymerizes to form a dynamic ring structure in a strictly GTP-dependent manner. Interacts directly with several other division proteins.

The protein resides in the cytoplasm. In terms of biological role, essential cell division protein that forms a contractile ring structure (Z ring) at the future cell division site. The regulation of the ring assembly controls the timing and the location of cell division. One of the functions of the FtsZ ring is to recruit other cell division proteins to the septum to produce a new cell wall between the dividing cells. Binds GTP and shows GTPase activity. This chain is Cell division protein FtsZ, found in Mycoplasmopsis pulmonis (strain UAB CTIP) (Mycoplasma pulmonis).